We begin with the raw amino-acid sequence, 249 residues long: 2,3-bisphosphoglycerate-dependent phosphoglycerate mutase (249 aa).

Substrate-binding positions include 9 to 16, 22 to 23, Arg61, 88 to 91, Lys99, 115 to 116, and 184 to 185; these read RHGQSQWN, TG, ERHY, RR, and GN. His10 functions as the Tele-phosphohistidine intermediate in the catalytic mechanism. The active-site Proton donor/acceptor is the Glu88.

Belongs to the phosphoglycerate mutase family. BPG-dependent PGAM subfamily. In terms of assembly, homodimer.

The enzyme catalyses (2R)-2-phosphoglycerate = (2R)-3-phosphoglycerate. It functions in the pathway carbohydrate degradation; glycolysis; pyruvate from D-glyceraldehyde 3-phosphate: step 3/5. In terms of biological role, catalyzes the interconversion of 2-phosphoglycerate and 3-phosphoglycerate. The protein is 2,3-bisphosphoglycerate-dependent phosphoglycerate mutase of Xylella fastidiosa (strain M23).